The primary structure comprises 300 residues: Eukaryotic translation initiation factor 3 subunit F (300 aa).

One can recognise an MPN domain in the interval 33-169 (VKVHPVALFS…VQCYVSALLG (137 aa)).

This sequence belongs to the eIF-3 subunit F family. In terms of assembly, component of the eukaryotic translation initiation factor 3 (eIF-3) complex.

It localises to the cytoplasm. In terms of biological role, component of the eukaryotic translation initiation factor 3 (eIF-3) complex, which is involved in protein synthesis of a specialized repertoire of mRNAs and, together with other initiation factors, stimulates binding of mRNA and methionyl-tRNAi to the 40S ribosome. The eIF-3 complex specifically targets and initiates translation of a subset of mRNAs involved in cell proliferation. The sequence is that of Eukaryotic translation initiation factor 3 subunit F from Malassezia globosa (strain ATCC MYA-4612 / CBS 7966) (Dandruff-associated fungus).